Consider the following 1905-residue polypeptide: Alpha-2-macroglobulin (1905 aa).

The signal sequence occupies residues 1–21 (MNKQYFLSLFSTLAVALTLSG). Residue Cys22 is the site of N-palmitoyl cysteine attachment. Residue Cys22 is the site of S-diacylglycerol cysteine attachment. The segment at residues 1438 to 1441 (CTEQ) is a cross-link (isoglutamyl cysteine thioester (Cys-Gln)).

It belongs to the protease inhibitor I39 (alpha-2-macroglobulin) family. Bacterial alpha-2-macroglobulin subfamily.

It is found in the cell membrane. Functionally, protects the bacterial cell from host peptidases. This is Alpha-2-macroglobulin from Pasteurella multocida (strain Pm70).